The following is a 345-amino-acid chain: Guanine nucleotide-binding protein G(i) subunit alpha-3 (345 aa).

In terms of domain architecture, G-alpha spans 23-345 (KEVKLLLLGA…KSNLMECGLY (323 aa)). The interval 26–39 (KLLLLGAGESGKST) is G1 motif. Positions 33, 34, 35, 36, 37, 38, 39, 141, 142, 166, 167, 168, 169, 170, 171, 172, 192, 194, 260, 261, 263, 264, 316, 317, and 318 each coordinate GTP. Ser38 contacts Mg(2+). The tract at residues 164-172 (DVLRTRVKT) is G2 motif. Thr172 is a binding site for Mg(2+). Residues 187-196 (FKMFDVGGQR) are G3 motif. Residues 256 to 263 (ILFLNKKD) form a G4 motif region. Positions 315–320 (TCATDT) are G5 motif.

This sequence belongs to the G-alpha family. G(i/o/t/z) subfamily. Heterotrimeric G proteins are composed of 3 units; alpha, beta and gamma. The alpha subunit contains the guanine nucleotide binding site. GTP binding causes dissociation of the heterotrimer, liberating the individual subunits so that they can interact with downstream effector proteins.

It is found in the cytoplasm. Its subcellular location is the cell membrane. It localises to the cytoskeleton. The protein resides in the microtubule organizing center. The protein localises to the centrosome. It is found in the membrane. Its function is as follows. Heterotrimeric guanine nucleotide-binding proteins (G proteins) function as transducers downstream of G protein-coupled receptors (GPCRs) in numerous signaling cascades. The alpha chain contains the guanine nucleotide binding site and alternates between an active, GTP-bound state and an inactive, GDP-bound state. Signaling by an activated GPCR promotes GDP release and GTP binding. The alpha subunit has a low GTPase activity that converts bound GTP to GDP, thereby terminating the signal. Both GDP release and GTP hydrolysis are modulated by numerous regulatory proteins. Signaling is mediated via effector proteins, such as adenylate cyclase. Inhibits adenylate cyclase activity, leading to decreased intracellular cAMP levels. Stimulates the activity of receptor-regulated K(+) channels. The active GTP-bound form prevents the association of RGS14 with centrosomes and is required for the translocation of RGS14 from the cytoplasm to the plasma membrane. May play a role in cell division. The active GTP-bound form activates the calcium permeant TRPC5 ion channels. The protein is Guanine nucleotide-binding protein G(i) subunit alpha-3 (gnai3) of Xenopus laevis (African clawed frog).